The sequence spans 919 residues: Isoleucine--tRNA ligase (919 aa).

A 'HIGH' region motif is present at residues 57-67; that stretch reads PYANGHIHIGT. L-isoleucyl-5'-AMP is bound at residue glutamate 553. Positions 594–598 match the 'KMSKS' region motif; sequence KMSKS. Position 597 (lysine 597) interacts with ATP. Cysteine 887, cysteine 890, cysteine 907, and cysteine 910 together coordinate Zn(2+).

It belongs to the class-I aminoacyl-tRNA synthetase family. IleS type 1 subfamily. As to quaternary structure, monomer. It depends on Zn(2+) as a cofactor.

The protein localises to the cytoplasm. It carries out the reaction tRNA(Ile) + L-isoleucine + ATP = L-isoleucyl-tRNA(Ile) + AMP + diphosphate. Catalyzes the attachment of isoleucine to tRNA(Ile). As IleRS can inadvertently accommodate and process structurally similar amino acids such as valine, to avoid such errors it has two additional distinct tRNA(Ile)-dependent editing activities. One activity is designated as 'pretransfer' editing and involves the hydrolysis of activated Val-AMP. The other activity is designated 'posttransfer' editing and involves deacylation of mischarged Val-tRNA(Ile). The protein is Isoleucine--tRNA ligase of Thermotoga maritima (strain ATCC 43589 / DSM 3109 / JCM 10099 / NBRC 100826 / MSB8).